The following is a 353-amino-acid chain: UPF0324 membrane protein PP_3661 (353 aa).

Helical transmembrane passes span 20 to 42, 70 to 92, 105 to 127, 137 to 159, 166 to 188, 234 to 253, 266 to 288, and 326 to 348; these read LNGI…MPAI, ASWA…AFFG, WSGL…WCGM, ALLT…ESAL, SAMA…PLAI, MTRV…WISR, IAMP…QVLP, and ALAT…TLGV.

It belongs to the UPF0324 family.

It is found in the cell membrane. This Pseudomonas putida (strain ATCC 47054 / DSM 6125 / CFBP 8728 / NCIMB 11950 / KT2440) protein is UPF0324 membrane protein PP_3661.